Reading from the N-terminus, the 1013-residue chain is Adhesion G-protein coupled receptor G2 (1013 aa).

The N-terminal stretch at 1 to 37 (MLFSGGQYSPVGRPEEVLLIYKIFLVIICFHAILVTS) is a signal peptide. At 38-623 (LKENAGNSSL…TSLPPSQMMA (586 aa)) the chain is on the extracellular side. N-linked (GlcNAc...) asparagine glycosylation is found at Asn44, Asn78, Asn92, Asn104, Asn128, Asn137, Asn155, Asn179, Asn187, Asn366, Asn431, Asn452, Asn457, Asn524, Asn538, Asn543, Asn547, and Asn593. The GAIN-B domain maps to 457–615 (NTTTFAAQDP…GILLDLSRTS (159 aa)). 2 disulfide bridges follow: Cys566-Cys597 and Cys585-Cys599. The GPS stretch occupies residues 566–615 (CVFWDLNRNGGRGGWSSDGCSVKEKRMNETICTCSHLTSFGILLDLSRTS). The stachel stretch occupies residues 604-615 (SFGILLDLSRTS). Residues 624 to 644 (LTFITYIGCGLSSIFLSVTLV) form a helical membrane-spanning segment. Residues 645-663 (TYIAFEKIRRDYPSKILIQ) lie on the Cytoplasmic side of the membrane. A helical transmembrane segment spans residues 664 to 684 (LCAALLLLNLVFLLDSWIALY). The Extracellular segment spans residues 685–688 (NARG). Residues 689 to 709 (FCISVAVFLHYFLLVSFTWMG) form a helical membrane-spanning segment. A disulfide bridge links Cys690 with Cys774. Topologically, residues 710–733 (LEAFHMYLALVKVFNTYIRKYILK) are cytoplasmic. A helical membrane pass occupies residues 734–754 (FCIVGWGIPAVVVSIVLTISP). Residues 755-785 (DNYGIGSYGKFPNGTPDDFCWINSSVVFYIT) are Extracellular-facing. Asn777 carries an N-linked (GlcNAc...) asparagine glycan. A helical membrane pass occupies residues 786–806 (VVGYFCVIFLLNVSMFIVVLV). Over 807-830 (QLCRIKKKKQLGAQRKTSIQDLRS) the chain is Cytoplasmic. The chain crosses the membrane as a helical span at residues 831 to 851 (IAGLTFLLGITWGFAFFAWGP). Residues 852 to 853 (VN) are Extracellular-facing. N-linked (GlcNAc...) asparagine glycosylation occurs at Asn853. The chain crosses the membrane as a helical span at residues 854–874 (LTFMYLFAIFNTLQGFFIFIF). Position 864 (Asn864) interacts with 3beta-hydroxyandrost-5-en-17-one. The Cytoplasmic segment spans residues 875 to 1013 (YCAAKENVRK…RGSLHFIEQM (139 aa)). The residue at position 1006 (Ser1006) is a Phosphoserine.

It belongs to the G-protein coupled receptor 2 family. Adhesion G-protein coupled receptor (ADGR) subfamily. Heterodimer of 2 chains generated by proteolytic processing; the large extracellular N-terminal fragment and the membrane-bound C-terminal fragment predominantly remain associated and non-covalently linked. Interacts with CFTR. In terms of processing, proteolytically cleaved into 2 subunits, an extracellular subunit and a seven-transmembrane subunit. Highly glycosylated. In terms of tissue distribution, epididymis-specific expression (at protein level). Associated with apical membranes of efferent ductule and proximal epididymal duct epithelia.

The protein resides in the apical cell membrane. With respect to regulation, forms a heterodimer of 2 chains generated by proteolytic processing that remain associated through non-covalent interactions mediated by the GAIN-B domain. In the inactivated receptor, the Stachel sequence (also named stalk) is embedded in the GAIN-B domain, where it adopts a beta-strand conformation. On activation, the Stachel moves into the 7 transmembrane region and adopts a twisted hook-shaped configuration that forms contacts within the receptor, leading to coupling of a G-alpha protein, which activates signaling. The cleaved GAIN-B and N-terminal domains can then dissociate from the rest of the receptor. Deoxycorticosterone (DOC) acts as an antagonist of ADGRG2. Functionally, adhesion G-protein coupled receptor (aGPCR) for steroid hormones, such as dehydroepiandrosterone (DHEA; also named 3beta-hydroxyandrost-5-en-17-one) and androstenedione. Involved in a signal transduction pathway controlling epididymal function and male fertility. Ligand binding causes a conformation change that triggers signaling via guanine nucleotide-binding proteins (G proteins) and modulates the activity of downstream effectors, such as adenylate cyclase. ADGRG2 is coupled to G(s) G proteins and mediates activation of adenylate cyclase activity. Also able to couple with G(q) G proteins in vitro. May regulate fluid exchange within epididymis. This Rattus norvegicus (Rat) protein is Adhesion G-protein coupled receptor G2.